We begin with the raw amino-acid sequence, 494 residues long: MDETIWLIISTVIIVLGIAKFLLGKSSSSSLSTMEWPVGPKKLPIIGNLHQLGGDVFHVVLANLAKVYGSVFTIWVGSWRPMIIVSDIDKAWEVLVNKSSDYSARDMPDITKIISANWKNISCSDSGPFWHNLRKGLQGVALTPLNVASQYHLQERDMKNLINSMYKDASRKNGILKPLDYLKEETVRLLSRLIFGQDFQDEKLVVGMHHALDDLVRISGYASLADAFKFCENLPSHKKSIREVHEVKKRVENLIRPHIVSNPPTNTYLYFLKTQDFNEDIIISAILEVYDLGVDSTASTTVWALTFLVREQEIQEKLYREIVNVTGGKRSVKVEDVNKMPYLQAVMKETMRMKPIAPMAIPHKTSKDTSLMGKKINKGSVIMVNLYAIHHNPKVFPEPYKFMPERFLKDVNSDESLGNIKTMESSLLAFSAGMRICAGMELGKLQLAFGLASLVHEFKWSCSVDGKLPDLSEDHCFILLMKNPLEAKITCRIH.

A helical transmembrane segment spans residues 4-24 (TIWLIISTVIIVLGIAKFLLG). C437 is a binding site for heme.

The protein belongs to the cytochrome P450 family. Requires heme as cofactor. In terms of tissue distribution, expressed in roots and at lower levels in stems, leaves and plantlets.

It localises to the endoplasmic reticulum membrane. It carries out the reaction (S)-scoulerine + reduced [NADPH--hemoprotein reductase] + O2 = (S)-cheilanthifoline + oxidized [NADPH--hemoprotein reductase] + 2 H2O + H(+). Methylenedioxy bridge-forming cytochrome P450 involved in the biosynthesis of isoquinoline alkaloids. Converts (S)-scoulerine into (S)-cheilanthifoline, a precursor of sanguinarine. Catalyzes an oxidative reaction that does not incorporate oxygen into the product. This Argemone mexicana (Mexican prickly poppy) protein is Cheilanthifoline synthase.